We begin with the raw amino-acid sequence, 384 residues long: MVMKKKRIIAMILAGGQGTRLKELTEDLAKPAVAFGGKYRIIDFTLTNCSNSGIDTVGVLTQYEPRILNNHIGRGSPWDLDRMDGGVTVLQPHTRKNDEKGWYKGTANAIYQNIKFIEEYDPEYVLILSGDHIYKMNYDKMLQFHIQKDADATIGVFKVPLVDAPSFGIMNTKDDMSIYEFEEKPKEPKSDLASMGIYIFNWKLLKKYLDEDEKDPNSSNDFGKNIIPNMLNDGKKMFAYPFKGYWRDVGTIQSFWDAHMDLLSEDNELDLFDKSWRVNTRQGIYTPSYFTKESKIKNTLIDKGCIVEGEIEHSVIFSGVKIGKNSKIIDSIIMADTEIGDNVTIQKAIIANDVKIVDNIVIGDGKKIAVVGEKKIIDSQSLVK.

Residues Tyr-103, Gly-168, 183 to 184, and Ser-194 each bind alpha-D-glucose 1-phosphate; that span reads EK.

The protein belongs to the bacterial/plant glucose-1-phosphate adenylyltransferase family. Homotetramer.

The catalysed reaction is alpha-D-glucose 1-phosphate + ATP + H(+) = ADP-alpha-D-glucose + diphosphate. Its pathway is glycan biosynthesis; glycogen biosynthesis. Its function is as follows. Involved in the biosynthesis of ADP-glucose, a building block required for the elongation reactions to produce glycogen. Catalyzes the reaction between ATP and alpha-D-glucose 1-phosphate (G1P) to produce pyrophosphate and ADP-Glc. The polypeptide is Glucose-1-phosphate adenylyltransferase (Fusobacterium nucleatum subsp. nucleatum (strain ATCC 25586 / DSM 15643 / BCRC 10681 / CIP 101130 / JCM 8532 / KCTC 2640 / LMG 13131 / VPI 4355)).